The following is a 92-amino-acid chain: Long neurotoxin 2 (92 aa).

The N-terminal stretch at 1 to 21 (MKTLLLTLVVVTIVCLDLGYT) is a signal peptide. 5 disulfides stabilise this stretch: Cys-24/Cys-42, Cys-35/Cys-63, Cys-48/Cys-52, Cys-67/Cys-79, and Cys-80/Cys-85.

It belongs to the three-finger toxin family. Long-chain subfamily. Type II alpha-neurotoxin sub-subfamily. Expressed by the venom gland.

The protein resides in the secreted. Functionally, binds with high affinity to muscular (alpha-1/CHRNA1) and neuronal (alpha-7/CHRNA7) nicotinic acetylcholine receptor (nAChR) and inhibits acetylcholine from binding to the receptor, thereby impairing neuromuscular and neuronal transmission. The sequence is that of Long neurotoxin 2 from Oxyuranus microlepidotus (Inland taipan).